The following is a 938-amino-acid chain: Isoleucine--tRNA ligase (938 aa).

The 'HIGH' region signature appears at 58-68; the sequence is PYANGSIHIGH. Residue E561 coordinates L-isoleucyl-5'-AMP. The 'KMSKS' region signature appears at 602–606; sequence KMSKS. Residue K605 participates in ATP binding. Positions 901, 904, 921, and 924 each coordinate Zn(2+).

Belongs to the class-I aminoacyl-tRNA synthetase family. IleS type 1 subfamily. As to quaternary structure, monomer. It depends on Zn(2+) as a cofactor.

It is found in the cytoplasm. The enzyme catalyses tRNA(Ile) + L-isoleucine + ATP = L-isoleucyl-tRNA(Ile) + AMP + diphosphate. Functionally, catalyzes the attachment of isoleucine to tRNA(Ile). As IleRS can inadvertently accommodate and process structurally similar amino acids such as valine, to avoid such errors it has two additional distinct tRNA(Ile)-dependent editing activities. One activity is designated as 'pretransfer' editing and involves the hydrolysis of activated Val-AMP. The other activity is designated 'posttransfer' editing and involves deacylation of mischarged Val-tRNA(Ile). This chain is Isoleucine--tRNA ligase, found in Serratia proteamaculans (strain 568).